The following is a 188-amino-acid chain: dTTP/UTP pyrophosphatase (188 aa).

Residue D67 is the Proton acceptor of the active site.

It belongs to the Maf family. YhdE subfamily. A divalent metal cation serves as cofactor.

It is found in the cytoplasm. The enzyme catalyses dTTP + H2O = dTMP + diphosphate + H(+). It catalyses the reaction UTP + H2O = UMP + diphosphate + H(+). Nucleoside triphosphate pyrophosphatase that hydrolyzes dTTP and UTP. May have a dual role in cell division arrest and in preventing the incorporation of modified nucleotides into cellular nucleic acids. The protein is dTTP/UTP pyrophosphatase of Roseobacter denitrificans (strain ATCC 33942 / OCh 114) (Erythrobacter sp. (strain OCh 114)).